A 158-amino-acid chain; its full sequence is Transcription elongation factor GreB (158 aa).

The protein belongs to the GreA/GreB family. GreB subfamily.

In terms of biological role, necessary for efficient RNA polymerase transcription elongation past template-encoded arresting sites. The arresting sites in DNA have the property of trapping a certain fraction of elongating RNA polymerases that pass through, resulting in locked ternary complexes. Cleavage of the nascent transcript by cleavage factors such as GreA or GreB allows the resumption of elongation from the new 3'terminus. GreB releases sequences of up to 9 nucleotides in length. The polypeptide is Transcription elongation factor GreB (Escherichia coli O157:H7).